The following is a 196-amino-acid chain: Peptidyl-tRNA hydrolase (196 aa).

Tyr-16 provides a ligand contact to tRNA. His-21 serves as the catalytic Proton acceptor. The tRNA site is built by Phe-67, Asn-69, and Asn-115.

This sequence belongs to the PTH family. Monomer.

It is found in the cytoplasm. It catalyses the reaction an N-acyl-L-alpha-aminoacyl-tRNA + H2O = an N-acyl-L-amino acid + a tRNA + H(+). Its function is as follows. Hydrolyzes ribosome-free peptidyl-tRNAs (with 1 or more amino acids incorporated), which drop off the ribosome during protein synthesis, or as a result of ribosome stalling. In terms of biological role, catalyzes the release of premature peptidyl moieties from peptidyl-tRNA molecules trapped in stalled 50S ribosomal subunits, and thus maintains levels of free tRNAs and 50S ribosomes. This chain is Peptidyl-tRNA hydrolase, found in Edwardsiella ictaluri (strain 93-146).